We begin with the raw amino-acid sequence, 166 residues long: 3-isopropylmalate dehydratase small subunit (166 aa).

Belongs to the LeuD family. LeuD type 2 subfamily. Heterodimer of LeuC and LeuD.

The catalysed reaction is (2R,3S)-3-isopropylmalate = (2S)-2-isopropylmalate. It functions in the pathway amino-acid biosynthesis; L-leucine biosynthesis; L-leucine from 3-methyl-2-oxobutanoate: step 2/4. Catalyzes the isomerization between 2-isopropylmalate and 3-isopropylmalate, via the formation of 2-isopropylmaleate. The polypeptide is 3-isopropylmalate dehydratase small subunit (Aliarcobacter butzleri (strain RM4018) (Arcobacter butzleri)).